A 613-amino-acid polypeptide reads, in one-letter code: Glutamyl-tRNA(Gln) amidotransferase subunit E (613 aa).

Belongs to the GatB/GatE family. GatE subfamily. As to quaternary structure, heterodimer of GatD and GatE.

It carries out the reaction L-glutamyl-tRNA(Gln) + L-glutamine + ATP + H2O = L-glutaminyl-tRNA(Gln) + L-glutamate + ADP + phosphate + H(+). Its function is as follows. Allows the formation of correctly charged Gln-tRNA(Gln) through the transamidation of misacylated Glu-tRNA(Gln) in organisms which lack glutaminyl-tRNA synthetase. The reaction takes place in the presence of glutamine and ATP through an activated gamma-phospho-Glu-tRNA(Gln). The GatDE system is specific for glutamate and does not act on aspartate. The protein is Glutamyl-tRNA(Gln) amidotransferase subunit E of Archaeoglobus fulgidus (strain ATCC 49558 / DSM 4304 / JCM 9628 / NBRC 100126 / VC-16).